A 962-amino-acid chain; its full sequence is Thrombospondin-3a (962 aa).

An N-terminal signal peptide occupies residues 1–23 (MEQMFVHIWVSLVVLMSVWSAQS). The region spanning 24–196 (DKKQDVPVID…MDTLKLALGG (173 aa)) is the Laminin G-like domain. In terms of domain architecture, EGF-like 1 spans 277 to 318 (PRSRCQPNPCFKGVSCMETFEYPGYRCGPCPDGMTGNGTHCQ). 20 cysteine pairs are disulfide-bonded: cysteine 281/cysteine 292, cysteine 286/cysteine 303, cysteine 306/cysteine 317, cysteine 323/cysteine 335, cysteine 329/cysteine 344, cysteine 347/cysteine 371, cysteine 377/cysteine 390, cysteine 384/cysteine 399, cysteine 402/cysteine 414, cysteine 420/cysteine 434, cysteine 428/cysteine 444, cysteine 446/cysteine 457, cysteine 473/cysteine 480, cysteine 485/cysteine 505, cysteine 521/cysteine 541, cysteine 544/cysteine 564, cysteine 580/cysteine 600, cysteine 603/cysteine 623, cysteine 641/cysteine 661, and cysteine 684/cysteine 704. N-linked (GlcNAc...) asparagine glycosylation is present at asparagine 313. Residues 319–358 (DIDECSEAQPCYTPGACVNTARGFTCESCPPGMWGPPLSG) form the EGF-like 2; calcium-binding domain. One can recognise an EGF-like 3; calcium-binding domain in the interval 373-412 (DIDECVDLANACTPNSVCINIIGSFRCGQCKTGYVGNQTA). Asparagine 409 carries N-linked (GlcNAc...) asparagine glycosylation. Residues 416-458 (PRKSCSSLSFNPCDANAHCVMQRNGDVSCACNVGWAGNGHTCG) enclose the EGF-like 4 domain. 8 TSP type-3 repeats span residues 459-493 (KDTDIDGYPDRSLPCMDNHKHCRQDNCVYTPNSGQ), 494-529 (EDADNDGIGDQCDEDADGDGIKNVEDNCRLVSNKDQ), 530-552 (QNSDTDSFGDACDNCPTVPNIDQ), 553-588 (KDTDSNGEGDACDDDIDGDGIQNVLDNCPKVPNPMQ), 589-611 (TDRDRDGVGDACDSCPEISNPMQ), 612-649 (TDVDNDLVGDVCDTNQDTDGDGHQDTRDNCPDIPNSSQ), 650-692 (LDSD…NPNQ), and 693-728 (KDSDSNGVGDVCENDFDNDSVMDLVDVCPESAEVTL). A disordered region spans residues 548-704 (PNIDQKDTDS…SDSNGVGDVC (157 aa)). Positions 557-570 (SNGEGDACDDDIDG) are enriched in acidic residues. A compositionally biased stretch (basic and acidic residues) spans 631-641 (GDGHQDTRDNC). Residue asparagine 646 is glycosylated (N-linked (GlcNAc...) asparagine). Residues 652–669 (SDNDGIGDDCDEDDDNDG) show a composition bias toward acidic residues. A glycan (N-linked (GlcNAc...) asparagine) is linked at asparagine 710. Cysteine 720 and cysteine 941 are joined by a disulfide. The TSP C-terminal domain occupies 732–946 (RAYQTVILDP…LRYRCNDTVP (215 aa)). The N-linked (GlcNAc...) asparagine glycan is linked to asparagine 942.

It belongs to the thrombospondin family. Oligomer; disulfide-linked.

In terms of biological role, adhesive glycoprotein that mediates cell-to-cell and cell-to-matrix interactions. Can bind to fibrinogen, fibronectin, laminin and type V collagen. The chain is Thrombospondin-3a (thbs3a) from Danio rerio (Zebrafish).